We begin with the raw amino-acid sequence, 368 residues long: Cytochrome P450 119 (368 aa).

His-76, Arg-80, Thr-257, Arg-259, His-315, and Cys-317 together coordinate heme.

Belongs to the cytochrome P450 family. It depends on heme as a cofactor.

It is found in the cytoplasm. The enzyme catalyses 2 a phenolic donor + H2O2 = 2 a phenolic radical donor + 2 H2O. Its function is as follows. The endogenous substrate is not known. In vitro, catalyzes the H(2)O(2)-dependent epoxidation of styrene, cis-beta-methylstyrene, and cis-stilbene with retention of stereochemistry. Is able to use cumene hydroperoxide (CHP) or tert-butyl hydroperoxide (TBHP) instead of H(2)O(2) as the electron acceptor. Can also hydroxylate fatty acids such as lauric acid. This chain is Cytochrome P450 119 (cyp119), found in Sulfolobus acidocaldarius (strain ATCC 33909 / DSM 639 / JCM 8929 / NBRC 15157 / NCIMB 11770).